The chain runs to 588 residues: Cryptochrome-1 (588 aa).

Residues V3–L132 form the Photolyase/cryptochrome alpha/beta domain. Residue K11 forms a Glycyl lysine isopeptide (Lys-Gly) (interchain with G-Cter in ubiquitin) linkage. Residues N50–F54 carry the LIR 1 motif. Residue S71 is modified to Phosphoserine; by AMPK. The LIR 2 signature appears at D82–L87. K107 is covalently cross-linked (Glycyl lysine isopeptide (Lys-Gly) (interchain with G-Cter in ubiquitin)). The LIR 3 signature appears at K151 to L156. K159 is covalently cross-linked (Glycyl lysine isopeptide (Lys-Gly) (interchain with G-Cter in ubiquitin)). S247 carries the phosphoserine; by MAPK modification. Position 252 (S252) interacts with FAD. 2 short sequence motifs (LIR) span residues L255–L260 and D271–V276. S280 bears the Phosphoserine; by AMPK mark. Residues S285–L290 carry the LIR 6 motif. Q289 contacts FAD. K329 is covalently cross-linked (Glycyl lysine isopeptide (Lys-Gly) (interchain with G-Cter in ubiquitin)). The LIR 7 motif lies at T335–W339. Residue H355 coordinates FAD. Residues W371–M470 are required for inhibition of CLOCK-BMAL1-mediated transcription. The LIR 8 motif lies at K379–L384. D387–D389 serves as a coordination point for FAD. 3 consecutive short sequence motifs (LIR) follow at residues G395–L400, H411–V416, and R430–V435. Positions V471–R493 are interaction with TIMELESS. Residue K485 forms a Glycyl lysine isopeptide (Lys-Gly) (interchain with G-Cter in ubiquitin) linkage. Short sequence motifs (LIR) lie at residues Q486 to L491 and S492 to L497. The interval G511–N588 is disordered. The span at D545–R568 shows a compositional bias: polar residues. K567 participates in a covalent cross-link: Glycyl lysine isopeptide (Lys-Gly) (interchain with G-Cter in ubiquitin). S570 bears the Phosphoserine mark.

It belongs to the DNA photolyase class-1 family. Component of the circadian core oscillator, which includes the CRY proteins, CLOCK or NPAS2, BMAL1 or BMAL2, CSNK1D and/or CSNK1E, TIMELESS, and the PER proteins. Interacts directly with TIMELESS. Interacts directly with PER1, PER2 and PER3; interaction with PER2 inhibits its ubiquitination and vice versa. Interacts with FBXL21. Interacts with FBXL3. Interacts with CLOCK-BMAL1 independently of PER2 and DNA. Interacts with HDAC1, HDAC2 and SIN3B. Interacts with nuclear receptors AR, NR1D1, NR3C1/GR, RORA and RORC; the interaction with at least NR3C1/GR is ligand dependent. Interacts with PRKDC. Interacts with the G protein subunit alpha GNAS; the interaction may block GPCR-mediated regulation of cAMP concentrations. Interacts with PRMT5. Interacts with EZH2. Interacts with MYBBP1A, DOCK7, HNRNPU, RPL7A, RPL8 and RPS3. Interacts with PPP5C (via TPR repeats). Interacts with MAP1LC3B. Interacts with CLOCK. Interacts with BMAL1. Interacts weakly with HDAC3; this interaction is enhanced in the presence of FBXL3. Interacts with TRIM28, KCTD5 and DDB1. Interacts with FOXO1. Interacts with DTL and DDB1-CUL4A complex. Interacts with HNF4A. Interacts with PSMD2 in a KDM8-dependent manner. Interacts with KDM8 in a FBXL3-dependent manner. Interacts with PPARG in a ligand-dependent manner. Interacts with PPARD (via domain NR LBD) and NR1I2 (via domain NR LBD) in a ligand-dependent manner. Interacts with PPARA, NR1I3 and VDR. It depends on FAD as a cofactor. Requires (6R)-5,10-methylene-5,6,7,8-tetrahydrofolate as cofactor. Post-translationally, phosphorylation on Ser-247 by MAPK is important for the inhibition of CLOCK-BMAL1-mediated transcriptional activity. Phosphorylation by CSNK1E requires interaction with PER1 or PER2. Phosphorylation at Ser-71 and Ser-280 by AMPK decreases protein stability. Phosphorylation at Ser-570 exhibits a robust circadian rhythm with a peak at CT8, increases protein stability, prevents SCF(FBXL3)-mediated degradation and is antagonized by interaction with PRKDC. In terms of processing, ubiquitinated by the SCF(FBXL3) and SCF(FBXL21) complexes, regulating the balance between degradation and stabilization. The SCF(FBXL3) complex is mainly nuclear and mediates ubiquitination and subsequent degradation of CRY1. In contrast, cytoplasmic SCF(FBXL21) complex-mediated ubiquitination leads to stabilize CRY1 and counteract the activity of the SCF(FBXL3) complex. The SCF(FBXL3) and SCF(FBXL21) complexes probably mediate ubiquitination at different Lys residues. Ubiquitination at Lys-11 and Lys-107 are specifically ubiquitinated by the SCF(FBXL21) complex but not by the SCF(FBXL3) complex. Ubiquitination may be inhibited by PER2. Deubiquitinated by USP7. Undergoes autophagy-mediated degradation in the liver in a time-dependent manner. Autophagic degradation of CRY1 (an inhibitor of gluconeogenesis) occurs during periods of reduced feeding allowing induction of gluconeogenesis and maintenance of blood glucose levels.

It localises to the cytoplasm. The protein localises to the nucleus. Functionally, transcriptional repressor which forms a core component of the circadian clock. The circadian clock, an internal time-keeping system, regulates various physiological processes through the generation of approximately 24 hour circadian rhythms in gene expression, which are translated into rhythms in metabolism and behavior. It is derived from the Latin roots 'circa' (about) and 'diem' (day) and acts as an important regulator of a wide array of physiological functions including metabolism, sleep, body temperature, blood pressure, endocrine, immune, cardiovascular, and renal function. Consists of two major components: the central clock, residing in the suprachiasmatic nucleus (SCN) of the brain, and the peripheral clocks that are present in nearly every tissue and organ system. Both the central and peripheral clocks can be reset by environmental cues, also known as Zeitgebers (German for 'timegivers'). The predominant Zeitgeber for the central clock is light, which is sensed by retina and signals directly to the SCN. The central clock entrains the peripheral clocks through neuronal and hormonal signals, body temperature and feeding-related cues, aligning all clocks with the external light/dark cycle. Circadian rhythms allow an organism to achieve temporal homeostasis with its environment at the molecular level by regulating gene expression to create a peak of protein expression once every 24 hours to control when a particular physiological process is most active with respect to the solar day. Transcription and translation of core clock components (CLOCK, NPAS2, BMAL1, BMAL2, PER1, PER2, PER3, CRY1 and CRY2) plays a critical role in rhythm generation, whereas delays imposed by post-translational modifications (PTMs) are important for determining the period (tau) of the rhythms (tau refers to the period of a rhythm and is the length, in time, of one complete cycle). A diurnal rhythm is synchronized with the day/night cycle, while the ultradian and infradian rhythms have a period shorter and longer than 24 hours, respectively. Disruptions in the circadian rhythms contribute to the pathology of cardiovascular diseases, cancer, metabolic syndromes and aging. A transcription/translation feedback loop (TTFL) forms the core of the molecular circadian clock mechanism. Transcription factors, CLOCK or NPAS2 and BMAL1 or BMAL2, form the positive limb of the feedback loop, act in the form of a heterodimer and activate the transcription of core clock genes and clock-controlled genes (involved in key metabolic processes), harboring E-box elements (5'-CACGTG-3') within their promoters. The core clock genes: PER1/2/3 and CRY1/2 which are transcriptional repressors form the negative limb of the feedback loop and interact with the CLOCK|NPAS2-BMAL1|BMAL2 heterodimer inhibiting its activity and thereby negatively regulating their own expression. This heterodimer also activates nuclear receptors NR1D1/2 and RORA/B/G, which form a second feedback loop and which activate and repress BMAL1 transcription, respectively. CRY1 and CRY2 have redundant functions but also differential and selective contributions at least in defining the pace of the SCN circadian clock and its circadian transcriptional outputs. More potent transcriptional repressor in cerebellum and liver than CRY2, though more effective in lengthening the period of the SCN oscillator. On its side, CRY2 seems to play a critical role in tuning SCN circadian period by opposing the action of CRY1. With CRY2, is dispensable for circadian rhythm generation but necessary for the development of intercellular networks for rhythm synchrony. Capable of translocating circadian clock core proteins such as PER proteins to the nucleus. Interacts with CLOCK-BMAL1 independently of PER proteins and is found at CLOCK-BMAL1-bound sites, suggesting that CRY may act as a molecular gatekeeper to maintain CLOCK-BMAL1 in a poised and repressed state until the proper time for transcriptional activation. Represses the CLOCK-BMAL1 induced transcription of BHLHE40/DEC1, ATF4, MTA1, KLF10 and NAMPT. May repress circadian target genes expression in collaboration with HDAC1 and HDAC2 through histone deacetylation. Mediates the clock-control activation of ATR and modulates ATR-mediated DNA damage checkpoint. In liver, mediates circadian regulation of cAMP signaling and gluconeogenesis by binding to membrane-coupled G proteins and blocking glucagon-mediated increases in intracellular cAMP concentrations and CREB1 phosphorylation. Inhibits hepatic gluconeogenesis by decreasing nuclear FOXO1 levels that down-regulates gluconeogenic gene expression. Besides its role in the maintenance of the circadian clock, is also involved in the regulation of other processes. Represses glucocorticoid receptor NR3C1/GR-induced transcriptional activity by binding to glucocorticoid response elements (GREs). Plays a key role in glucose and lipid metabolism modulation, in part, through the transcriptional regulation of genes involved in these pathways, such as LEP or ACSL4. Represses PPARD and its target genes in the skeletal muscle and limits exercise capacity. Plays an essential role in the generation of circadian rhythms in the retina. Represses the transcriptional activity of NR1I2. The sequence is that of Cryptochrome-1 (Cry1) from Rattus norvegicus (Rat).